The primary structure comprises 273 residues: Phosphatidylglycerol--prolipoprotein diacylglyceryl transferase (273 aa).

A run of 4 helical transmembrane segments spans residues 18–38 (IPVRWYGLLIVSGIILAYVVG), 47–67 (LPEDFLADLLLWAVPISIICA), 89–109 (IWNGGIAIHGALIGAFVTAYI), and 116–136 (VSFLRVADIAAPSILIGQIIG). Arginine 137 is a binding site for a 1,2-diacyl-sn-glycero-3-phospho-(1'-sn-glycerol). A run of 3 helical transmembrane segments spans residues 178–198 (VHPTFLYESVWNLIGLIILLI), 207–227 (GEIFFSYLIWYSIGRFYIEGM), and 238–258 (LRSAQIVSIIGIVVGLGAIIY).

This sequence belongs to the Lgt family.

The protein resides in the cell membrane. The catalysed reaction is L-cysteinyl-[prolipoprotein] + a 1,2-diacyl-sn-glycero-3-phospho-(1'-sn-glycerol) = an S-1,2-diacyl-sn-glyceryl-L-cysteinyl-[prolipoprotein] + sn-glycerol 1-phosphate + H(+). Its pathway is protein modification; lipoprotein biosynthesis (diacylglyceryl transfer). Functionally, catalyzes the transfer of the diacylglyceryl group from phosphatidylglycerol to the sulfhydryl group of the N-terminal cysteine of a prolipoprotein, the first step in the formation of mature lipoproteins. In Lysinibacillus sphaericus (strain C3-41), this protein is Phosphatidylglycerol--prolipoprotein diacylglyceryl transferase.